The sequence spans 213 residues: Ribonuclease HII (213 aa).

One can recognise an RNase H type-2 domain in the interval Gly18–Arg213. A divalent metal cation contacts are provided by Asp24, Glu25, and Asp116.

Belongs to the RNase HII family. Requires Mn(2+) as cofactor. Mg(2+) serves as cofactor.

Its subcellular location is the cytoplasm. The enzyme catalyses Endonucleolytic cleavage to 5'-phosphomonoester.. In terms of biological role, endonuclease that specifically degrades the RNA of RNA-DNA hybrids. This chain is Ribonuclease HII, found in Shewanella woodyi (strain ATCC 51908 / MS32).